We begin with the raw amino-acid sequence, 1108 residues long: Lon protease homolog, mitochondrial (1108 aa).

The transit peptide at 1–62 (MLRGQSLPWR…RAFSTSSIRR (62 aa)) directs the protein to the mitochondrion. Disordered stretches follow at residues 24 to 192 (PLLP…QKPS) and 299 to 318 (LPPGEQSKAGNTEDKAPEKK). A compositionally biased stretch (low complexity) spans 36-53 (RSNLSISRLSRSPSLSPR). Basic and acidic residues-rich tracts occupy residues 78–103 (EQKDPNEQKDSDRSPEGRRRSPDSTG) and 119–146 (KVAGEKEQRGVEEDAKKENVSIEGKSDP). The span at 161–171 (SDTKSSASNGG) shows a compositional bias: polar residues. Basic and acidic residues-rich tracts occupy residues 174–188 (DGGRKGKKGSGDRAL) and 309–318 (NTEDKAPEKK). In terms of domain architecture, Lon N-terminal spans 200 to 452 (VMAIPIAKRP…KALVVLKKEL (253 aa)). An ATP-binding site is contributed by 605–612 (GPPGVGKT). The span at 821 to 855 (DKALTDEGKAAQEESKKETEEGDPKDPPADPEKST) shows a compositional bias: basic and acidic residues. The segment at 821 to 862 (DKALTDEGKAAQEESKKETEEGDPKDPPADPEKSTTETPRLA) is disordered. In terms of domain architecture, Lon proteolytic spans 895–1081 (TFPPGVTMGL…SEVFNILFAE (187 aa)). Catalysis depends on residues Ser987 and Lys1030.

Belongs to the peptidase S16 family. As to quaternary structure, homohexamer or homoheptamer. Organized in a ring with a central cavity.

It is found in the mitochondrion matrix. It carries out the reaction Hydrolysis of proteins in presence of ATP.. Functionally, ATP-dependent serine protease that mediates the selective degradation of misfolded, unassembled or oxidatively damaged polypeptides as well as certain short-lived regulatory proteins in the mitochondrial matrix. May also have a chaperone function in the assembly of inner membrane protein complexes. Participates in the regulation of mitochondrial gene expression and in the maintenance of the integrity of the mitochondrial genome. Binds to mitochondrial DNA in a site-specific manner. The protein is Lon protease homolog, mitochondrial (pim1) of Aspergillus fumigatus (strain ATCC MYA-4609 / CBS 101355 / FGSC A1100 / Af293) (Neosartorya fumigata).